Consider the following 112-residue polypeptide: T cell receptor alpha variable 7 (112 aa).

Positions 1 to 21 (MEKMRRPVLIIFCLCLGWANG) are cleaved as a signal peptide. The 91-residue stretch at 22-112 (ENQVEHSPHF…DSATYFCAVD (91 aa)) folds into the Ig-like domain. Cys44 and Cys109 are joined by a disulfide. N-linked (GlcNAc...) asparagine glycans are attached at residues Asn84 and Asn90.

In terms of assembly, alpha-beta TR is a heterodimer composed of an alpha and beta chain; disulfide-linked. The alpha-beta TR is associated with the transmembrane signaling CD3 coreceptor proteins to form the TR-CD3 (TcR or TCR). The assembly of alpha-beta TR heterodimers with CD3 occurs in the endoplasmic reticulum where a single alpha-beta TR heterodimer associates with one CD3D-CD3E heterodimer, one CD3G-CD3E heterodimer and one CD247 homodimer forming a stable octameric structure. CD3D-CD3E and CD3G-CD3E heterodimers preferentially associate with TR alpha and TR beta chains, respectively. The association of the CD247 homodimer is the last step of TcR assembly in the endoplasmic reticulum and is required for transport to the cell surface.

The protein localises to the cell membrane. Its function is as follows. V region of the variable domain of T cell receptor (TR) alpha chain that participates in the antigen recognition. Alpha-beta T cell receptors are antigen specific receptors which are essential to the immune response and are present on the cell surface of T lymphocytes. Recognize peptide-major histocompatibility (MH) (pMH) complexes that are displayed by antigen presenting cells (APC), a prerequisite for efficient T cell adaptive immunity against pathogens. Binding of alpha-beta TR to pMH complex initiates TR-CD3 clustering on the cell surface and intracellular activation of LCK that phosphorylates the ITAM motifs of CD3G, CD3D, CD3E and CD247 enabling the recruitment of ZAP70. In turn ZAP70 phosphorylates LAT, which recruits numerous signaling molecules to form the LAT signalosome. The LAT signalosome propagates signal branching to three major signaling pathways, the calcium, the mitogen-activated protein kinase (MAPK) kinase and the nuclear factor NF-kappa-B (NF-kB) pathways, leading to the mobilization of transcription factors that are critical for gene expression and essential for T cell growth and differentiation. The T cell repertoire is generated in the thymus, by V-(D)-J rearrangement. This repertoire is then shaped by intrathymic selection events to generate a peripheral T cell pool of self-MH restricted, non-autoaggressive T cells. Post-thymic interaction of alpha-beta TR with the pMH complexes shapes TR structural and functional avidity. This is T cell receptor alpha variable 7 from Homo sapiens (Human).